The chain runs to 408 residues: Aminopeptidase T (408 aa).

E250, E316, E340, H345, H376, and D378 together coordinate a divalent metal cation.

It belongs to the peptidase M29 family. Homodimer. Co(2+) is required as a cofactor. Requires Zn(2+) as cofactor. It depends on Mg(2+) as a cofactor.

In terms of biological role, metal-dependent exopeptidase. This Thermus thermophilus (strain ATCC 27634 / DSM 579 / HB8) protein is Aminopeptidase T.